Here is a 63-residue protein sequence, read N- to C-terminus: Prokaryotic ubiquitin-like protein Pup (63 aa).

Positions 1–35 (MSGQQSQINAGGGNGQGGDTPEFDAGQVSINSAGT) are disordered. An ARC ATPase binding region spans residues 19 to 57 (DTPEFDAGQVSINSAGTDDLLDEIDGLLESNAEEFVRSY). Glu63 is covalently cross-linked (Isoglutamyl lysine isopeptide (Glu-Lys) (interchain with K-? in acceptor proteins)).

Belongs to the prokaryotic ubiquitin-like protein family. In terms of assembly, strongly interacts with the proteasome-associated ATPase ARC through a hydrophobic interface; the interacting region of Pup lies in its C-terminal half. There is one Pup binding site per ARC hexamer ring.

Its pathway is protein degradation; proteasomal Pup-dependent pathway. Its function is as follows. Protein modifier that is covalently attached to lysine residues of substrate proteins, thereby targeting them for proteasomal degradation. The tagging system is termed pupylation. This Corynebacterium aurimucosum (strain ATCC 700975 / DSM 44827 / CIP 107346 / CN-1) (Corynebacterium nigricans) protein is Prokaryotic ubiquitin-like protein Pup.